Reading from the N-terminus, the 184-residue chain is Photosystem I assembly protein Ycf4 (184 aa).

Transmembrane regions (helical) follow at residues 19–39 (ISNF…LLVG) and 57–77 (IIFF…LFIS).

Belongs to the Ycf4 family.

It localises to the plastid. Its subcellular location is the chloroplast thylakoid membrane. Seems to be required for the assembly of the photosystem I complex. This Cucumis sativus (Cucumber) protein is Photosystem I assembly protein Ycf4.